The primary structure comprises 2169 residues: Voltage-dependent L-type calcium channel subunit alpha-1C (2169 aa).

At 1–153 (MVPLVQPTTP…RACISIVEWK (153 aa)) the chain is on the cytoplasmic side. The calmodulin-binding stretch occupies residues 76–97 (GAALSWQAAIDAGRQAKLMGSA). Residues 98–108 (GNTTISTVSST) are compositionally biased toward polar residues. A disordered region spans residues 98–127 (GNTTISTVSSTQRKRQQYGKPKKQSGTTAT). The segment covering 109-120 (QRKRQQYGKPKK) has biased composition (basic residues). An I repeat occupies 140–437 (NPIRRACISI…LVLGVLSGEF (298 aa)). A helical transmembrane segment spans residues 154–172 (PFEIIILLTIFANCVALAI). Over 173 to 187 (YIPFPEDDSNATNSN) the chain is Extracellular. A glycan (N-linked (GlcNAc...) asparagine) is linked at N182. Residues 188-208 (LERVEYLFLIIFTVEAFLKVI) traverse the membrane as a helical segment. Over 209–217 (AYGLLFHPN) the chain is Cytoplasmic. A helical membrane pass occupies residues 218 to 238 (AYLRNGWNLLDFIIVVVGLFS). The Extracellular portion of the chain corresponds to 239 to 261 (AILEQATKADGANALGGKGAGFD). A helical membrane pass occupies residues 262–280 (VKALRAFRVLRPLRLVSGV). Residues 281 to 297 (PSLQVVLNSIIKAMVPL) are Cytoplasmic-facing. A helical transmembrane segment spans residues 298–319 (LHTALLVLFVIIIYAIIGLELF). Residues 320–379 (MGKMHKTCYNQEGITDVPAEEDPSPCALESGHGRQCQNGTVCKPGWDGPKHGITNFDNFA) lie on the Extracellular side of the membrane. C345 and C361 are oxidised to a cystine. N357 is a glycosylation site (N-linked (GlcNAc...) asparagine). The pore-forming intramembrane region spans 380–401 (FAMLTVFQCITMEGWTDVLYWM). The short motif at 390–393 (TMEG) is the Selectivity filter of repeat I element. Ca(2+) is bound at residue E392. Over 402–409 (QDAMGYEL) the chain is Extracellular. Residues 410–430 (PWVYFVSLVIFGSFFVLNLVL) form a helical membrane-spanning segment. At 431–553 (GVLSGEFSKE…RKCRAAVKSN (123 aa)) the chain is on the cytoplasmic side. The segment at 457–474 (QQLEEDLKGYLDWITQAE) is AID/alpha-interaction domain; mediates interaction with the beta subunit. The disordered stretch occupies residues 478–510 (PENEDEGVDEEKPRNMSMPTSETESVNTENVAG). A compositionally biased stretch (polar residues) spans 494–507 (SMPTSETESVNTEN). A Phosphoserine modification is found at S498. Residue T505 is modified to Phosphothreonine. The stretch at 539–785 (NRFCRRKCRA…VFLAIAVDNL (247 aa)) is one II repeat. The helical transmembrane segment at 554 to 572 (VFYWLVIFLVFLNTLTIAS) threads the bilayer. At 573 to 583 (EHYNQPHWLTE) the chain is on the extracellular side. The chain crosses the membrane as a helical span at residues 584 to 604 (VQDTANKALLALFTAEMLLKM). Topologically, residues 605-615 (YSLGLQAYFVS) are cytoplasmic. The helical transmembrane segment at 616 to 635 (LFNRLDCFIVCGGILETILV) threads the bilayer. At 636–644 (ETKIMSPLG) the chain is on the extracellular side. A helical membrane pass occupies residues 645–663 (ISVLRCVRLLRIFKITRYW). The Cytoplasmic portion of the chain corresponds to 664-682 (NSLSNLVASLLNSVRSIAS). A helical transmembrane segment spans residues 683-702 (LLLLLFLFIIIFSLLGMQLF). Over 703-722 (GGKFNFDEMRTRRSTFDNFP) the chain is Extracellular. Positions 723 to 744 (QSLLTVFQILTGEDWNSVMYDG) form an intramembrane region, pore-forming. Positions 733 to 736 (TGED) match the Selectivity filter of repeat II motif. E735 contacts Ca(2+). At 745–754 (IMAYGGPSFP) the chain is on the extracellular side. Residues 755–774 (GMLVCIYFIILFICGNYILL) traverse the membrane as a helical segment. The Cytoplasmic portion of the chain corresponds to 775–929 (NVFLAIAVDN…LQCHRIVNDT (155 aa)). A disordered region spans residues 793–890 (SAQKEEEEEK…EMPVGPRPRP (98 aa)). Over residues 812 to 835 (SPEKKQEVVEKPAVEETKEEKIEL) the composition is skewed to basic and acidic residues. Phosphoserine is present on residues S837 and S844. The tract at residues 858–905 (NENEDKSPYPNPDAAGEEDEEEPEMPVGPRPRPLSELHLKEKAVPMPE) is interaction with STAC2. The segment covering 872-881 (AGEEDEEEPE) has biased composition (acidic residues). An III repeat occupies 916 to 1198 (NRFRLQCHRI…IFVGFVIVTF (283 aa)). Residues 930–948 (IFTNLILFFILLSSISLAA) form a helical membrane-spanning segment. Topologically, residues 949–960 (EDPVQHTSFRNH) are extracellular. A helical membrane pass occupies residues 961–980 (ILFYFDIVFTTIFTIEIALK). Residues 981–996 (MTAYGAFLHKGSFCRN) lie on the Cytoplasmic side of the membrane. Residues 997–1015 (YFNILDLLVVSVSLISFGI) form a helical membrane-spanning segment. At 1016–1022 (QSSAINV) the chain is on the extracellular side. A helical transmembrane segment spans residues 1023-1041 (VKILRVLRVLRPLRAINRA). The Cytoplasmic segment spans residues 1042-1060 (KGLKHVVQCVFVAIRTIGN). Residues 1061-1080 (IVIVTTLLQFMFACIGVQLF) form a helical membrane-spanning segment. The Extracellular portion of the chain corresponds to 1081 to 1130 (KGKLYTCSDSSKQTEAECKGNYITYKDGEVDQPIIQPRSWENSKFDFDNV). A disulfide bridge links C1087 with C1098. A dihydropyridine binding region spans residues 1118–1207 (RSWENSKFDF…FQEQGEQEYK (90 aa)). An intramembrane region (pore-forming) is located at residues 1131 to 1151 (LAAMMALFTVSTFEGWPELLY). Positions 1142–1145 (TFEG) match the Selectivity filter of repeat III motif. Residue E1144 participates in Ca(2+) binding. Residues 1152 to 1168 (RSIDSHTEDKGPIYNYR) are Extracellular-facing. Residues 1169-1190 (VEISIFFIIYIIIIAFFMMNIF) form a helical membrane-spanning segment. At 1191 to 1248 (VGFVIVTFQEQGEQEYKNCELDKNQRQCVEYALKARPLRRYIPKNQHQYKVWYVVNST) the chain is on the cytoplasmic side. One copy of the IV repeat lies at 1235–1508 (NQHQYKVWYV…LFVAVVMDNF (274 aa)). A helical membrane pass occupies residues 1249 to 1270 (YFEYLMFVLILLNTICLAMQHY). The Extracellular segment spans residues 1271–1278 (GQSCLFKI). The helical transmembrane segment at 1279–1300 (AMNILNMLFTGLFTVEMILKLI) threads the bilayer. Residues 1301-1310 (AFKPKHYFCD) lie on the Cytoplasmic side of the membrane. Residues 1311–1330 (AWNTFDALIVVGSIVDIAIT) form a helical membrane-spanning segment. At 1331 to 1353 (EVNPAEHTQCSPSMNAEENSRIS) the chain is on the extracellular side. Residues 1354 to 1372 (ITFFRLFRVMRLVKLLSRG) form a helical membrane-spanning segment. The Cytoplasmic portion of the chain corresponds to 1373–1390 (EGIRTLLWTFIKSFQALP). The chain crosses the membrane as a helical span at residues 1391–1411 (YVALLIVMLFFIYAVIGMQVF). Topologically, residues 1412-1433 (GKIALNDTTEINRNNNFQTFPQ) are extracellular. The N-linked (GlcNAc...) asparagine glycan is linked to N1417. Positions 1434-1452 (AVLLLFRCATGEAWQDIML) form an intramembrane region, pore-forming. Positions 1443 to 1446 (TGEA) match the Selectivity filter of repeat IV motif. At 1453 to 1480 (ACMPGKKCAPESDPSNSTEGETPCGSSF) the chain is on the extracellular side. Residues 1459 to 1527 (KCAPESDPSN…LGPHHLDEFK (69 aa)) form a dihydropyridine binding region. A disulfide bond links C1460 and C1476. N1468 carries N-linked (GlcNAc...) asparagine glycosylation. Residues 1473–1515 (ETPCGSSFAVFYFISFYMLCAFLIINLFVAVVMDNFDYLTRDW) are phenylalkylamine binding. A helical membrane pass occupies residues 1481-1505 (AVFYFISFYMLCAFLIINLFVAVVM). Topologically, residues 1506–2169 (DNFDYLTRDW…ADSRVHVRSL (664 aa)) are cytoplasmic. Residues 1640-1667 (DEVTVGKFYATFLIQEYFRKFKKRKEQG) are important for interaction with STAC1, STAC2 and STAC3. The segment at 1646–1666 (KFYATFLIQEYFRKFKKRKEQ) is calmodulin-binding IQ region. The tract at residues 1680–1699 (LQAGLRTLHDIGPEIRRAIS) is important for localization in at the junctional membrane. 2 positions are modified to phosphoserine: S1699 and S1720. Disordered regions lie at residues 1761-1793 (KAGN…TGSN) and 1894-1920 (ENRQ…LRSA). Over residues 1780 to 1792 (STFTPSSYSSTGS) the composition is skewed to polar residues. Positions 1894 to 1910 (ENRQLTPPEEDKGDTRP) are enriched in basic and acidic residues. S1927 is modified (phosphoserine).

This sequence belongs to the calcium channel alpha-1 subunit (TC 1.A.1.11) family. CACNA1C subfamily. Component of a calcium channel complex consisting of a pore-forming alpha subunit (CACNA1C) and ancillary beta, gamma and delta subunits. The channel complex contains alpha, beta, gamma and delta subunits in a 1:1:1:1 ratio, i.e. it contains only one of each type of subunit. CACNA1C channel activity is modulated by ancillary subunits, such as CACNB1, CACNB2, CACNB3, CACNA2D1 and CACNA2D4. Interacts with CACNB1. Interacts with CACNB2. Identified in a complex with CACNA2D4 and CACNB3. Interacts with CACNB3. Interacts with CACNA2D1. Interacts with CACNA2D4. Interacts with the gamma subunits CACNG4, CACNG6, CACNG7 and CACNG8. Interacts with CALM1. Interacts (via the N-terminus and the C-terminal C and IQ motifs) with CABP1; this inhibits Ca(2+)-dependent channel inactivation. The binding via the C motif is calcium independent whereas the binding via IQ requires the presence of calcium and is mutually exclusive with calmodulin binding. The binding to the cytoplasmic N-terminal domain is calcium independent but is essential for the channel modulation. Interacts (via C-terminal CDB motif) with CABP5; in a calcium-dependent manner. Interacts with CIB1; the interaction increases upon cardiomyocytes hypertrophy. Interacts with STAC2 and STAC3; this inhibits channel inactivation. In terms of processing, phosphorylation by PKA at Ser-1927 activates the channel. Elevated levels of blood glucose lead to increased phosphorylation by PKA. As to expression, expressed in heart. Expressed in uterus.

Its subcellular location is the cell membrane. The protein localises to the sarcolemma. The protein resides in the perikaryon. It localises to the postsynaptic density membrane. It is found in the cell projection. Its subcellular location is the dendrite. The protein localises to the T-tubule. The enzyme catalyses Ca(2+)(in) = Ca(2+)(out). With respect to regulation, inhibited by dihydropyridines (DHP), such as isradipine. Inhibited by nifedipine. Channel activity is regulated by Ca(2+) and calmodulin. Binding of STAC1, STAC2 or STAC3 to a region that overlaps with the calmodulin binding site inhibits channel inactivation by Ca(2+) and calmodulin. Binding of calmodulin or CABP1 at the same regulatory sites results in opposite effects on the channel function. Shear stress and pressure increases calcium channel activity. In terms of biological role, pore-forming, alpha-1C subunit of the voltage-gated calcium channel that gives rise to L-type calcium currents. Mediates influx of calcium ions into the cytoplasm, and thereby triggers calcium release from the sarcoplasm. Plays an important role in excitation-contraction coupling in the heart. Required for normal heart development and normal regulation of heart rhythm. Required for normal contraction of smooth muscle cells in blood vessels and in the intestine. Essential for normal blood pressure regulation via its role in the contraction of arterial smooth muscle cells. Long-lasting (L-type) calcium channels belong to the 'high-voltage activated' (HVA) group. The polypeptide is Voltage-dependent L-type calcium channel subunit alpha-1C (CACNA1C) (Cavia porcellus (Guinea pig)).